The sequence spans 174 residues: ATP-dependent protease subunit HslV (174 aa).

The active site involves T4. Na(+) is bound by residues A159, C162, and T165.

This sequence belongs to the peptidase T1B family. HslV subfamily. As to quaternary structure, a double ring-shaped homohexamer of HslV is capped on each side by a ring-shaped HslU homohexamer. The assembly of the HslU/HslV complex is dependent on binding of ATP.

Its subcellular location is the cytoplasm. It carries out the reaction ATP-dependent cleavage of peptide bonds with broad specificity.. Allosterically activated by HslU binding. Protease subunit of a proteasome-like degradation complex believed to be a general protein degrading machinery. This is ATP-dependent protease subunit HslV from Moorella thermoacetica (strain ATCC 39073 / JCM 9320).